The sequence spans 333 residues: Global transcription regulator sge1 (333 aa).

Disordered regions lie at residues 93–139 and 241–307; these read PPGE…PSVP and QHQS…PQYQ.

The protein belongs to the MIT1/WOR1 family.

It localises to the nucleus. Global transcriptional regulator that acts as an activator of secondary metabolism. Required for expression of a yet uncharacterized secondary metabolism gene cluster containing a non-canonical non-ribosomal peptide synthetase. Not required for conidiogenesis nor for pathogenicity, but is involved in vegetative growth. The sequence is that of Global transcription regulator sge1 from Gibberella fujikuroi (strain CBS 195.34 / IMI 58289 / NRRL A-6831) (Bakanae and foot rot disease fungus).